Here is a 140-residue protein sequence, read N- to C-terminus: Nucleoside diphosphate kinase (140 aa).

ATP is bound by residues Lys11, Phe59, Arg87, Thr93, Arg104, and Asn114. His117 serves as the catalytic Pros-phosphohistidine intermediate.

This sequence belongs to the NDK family. Homotetramer. Mg(2+) serves as cofactor.

Its subcellular location is the cytoplasm. It carries out the reaction a 2'-deoxyribonucleoside 5'-diphosphate + ATP = a 2'-deoxyribonucleoside 5'-triphosphate + ADP. It catalyses the reaction a ribonucleoside 5'-diphosphate + ATP = a ribonucleoside 5'-triphosphate + ADP. In terms of biological role, major role in the synthesis of nucleoside triphosphates other than ATP. The ATP gamma phosphate is transferred to the NDP beta phosphate via a ping-pong mechanism, using a phosphorylated active-site intermediate. The sequence is that of Nucleoside diphosphate kinase from Rhodopseudomonas palustris (strain HaA2).